The primary structure comprises 228 residues: PKHD-type hydroxylase Rmet_3078 (228 aa).

In terms of domain architecture, Fe2OG dioxygenase spans 80 to 180 (IVYPPMFNRY…RVGCFFWIQS (101 aa)). 3 residues coordinate Fe cation: H98, D100, and H161. Residue R171 coordinates 2-oxoglutarate.

It depends on Fe(2+) as a cofactor. The cofactor is L-ascorbate.

The chain is PKHD-type hydroxylase Rmet_3078 from Cupriavidus metallidurans (strain ATCC 43123 / DSM 2839 / NBRC 102507 / CH34) (Ralstonia metallidurans).